Here is a 360-residue protein sequence, read N- to C-terminus: DNA replication and repair protein RecF (360 aa).

An ATP-binding site is contributed by 30–37 (GQNGSGKT).

This sequence belongs to the RecF family.

It localises to the cytoplasm. In terms of biological role, the RecF protein is involved in DNA metabolism; it is required for DNA replication and normal SOS inducibility. RecF binds preferentially to single-stranded, linear DNA. It also seems to bind ATP. The chain is DNA replication and repair protein RecF from Shewanella baltica (strain OS223).